The chain runs to 742 residues: Phosphoribosylformylglycinamidine synthase subunit PurL (742 aa).

H54 is a catalytic residue. ATP contacts are provided by Y57 and K96. E98 is a binding site for Mg(2+). Substrate contacts are provided by residues 99–102 (SHNH) and R121. Catalysis depends on H100, which acts as the Proton acceptor. Residue D122 participates in Mg(2+) binding. Substrate is bound at residue Q245. D273 is a binding site for Mg(2+). 317 to 319 (ESQ) provides a ligand contact to substrate. 2 residues coordinate ATP: D500 and G537. N538 is a binding site for Mg(2+). Residue S540 participates in substrate binding.

This sequence belongs to the FGAMS family. In terms of assembly, monomer. Part of the FGAM synthase complex composed of 1 PurL, 1 PurQ and 2 PurS subunits.

It localises to the cytoplasm. The enzyme catalyses N(2)-formyl-N(1)-(5-phospho-beta-D-ribosyl)glycinamide + L-glutamine + ATP + H2O = 2-formamido-N(1)-(5-O-phospho-beta-D-ribosyl)acetamidine + L-glutamate + ADP + phosphate + H(+). It participates in purine metabolism; IMP biosynthesis via de novo pathway; 5-amino-1-(5-phospho-D-ribosyl)imidazole from N(2)-formyl-N(1)-(5-phospho-D-ribosyl)glycinamide: step 1/2. In terms of biological role, part of the phosphoribosylformylglycinamidine synthase complex involved in the purines biosynthetic pathway. Catalyzes the ATP-dependent conversion of formylglycinamide ribonucleotide (FGAR) and glutamine to yield formylglycinamidine ribonucleotide (FGAM) and glutamate. The FGAM synthase complex is composed of three subunits. PurQ produces an ammonia molecule by converting glutamine to glutamate. PurL transfers the ammonia molecule to FGAR to form FGAM in an ATP-dependent manner. PurS interacts with PurQ and PurL and is thought to assist in the transfer of the ammonia molecule from PurQ to PurL. The chain is Phosphoribosylformylglycinamidine synthase subunit PurL from Bacillus velezensis (strain DSM 23117 / BGSC 10A6 / LMG 26770 / FZB42) (Bacillus amyloliquefaciens subsp. plantarum).